Here is a 99-residue protein sequence, read N- to C-terminus: Integration host factor subunit alpha (99 aa).

Residues 49-72 form a disordered region; the sequence is FGNFDLRDKNQRPGRNPKTGEDIP.

Belongs to the bacterial histone-like protein family. Heterodimer of an alpha and a beta chain.

In terms of biological role, this protein is one of the two subunits of integration host factor, a specific DNA-binding protein that functions in genetic recombination as well as in transcriptional and translational control. The chain is Integration host factor subunit alpha from Escherichia coli O9:H4 (strain HS).